The sequence spans 43 residues: Protein PsbN (43 aa).

The helical transmembrane segment at 7 to 27 (VAIFISCLLVSFTGYALYTAF) threads the bilayer.

It belongs to the PsbN family.

The protein localises to the plastid. The protein resides in the chloroplast thylakoid membrane. Functionally, may play a role in photosystem I and II biogenesis. This chain is Protein PsbN, found in Huperzia lucidula (Shining clubmoss).